The following is a 257-amino-acid chain: Urease accessory protein UreD 3 (257 aa).

The tract at residues 1-22 (MSVRATARLRAEPDGRDGTALP) is disordered.

This sequence belongs to the UreD family. In terms of assembly, ureD, UreF and UreG form a complex that acts as a GTP-hydrolysis-dependent molecular chaperone, activating the urease apoprotein by helping to assemble the nickel containing metallocenter of UreC. The UreE protein probably delivers the nickel.

It is found in the cytoplasm. In terms of biological role, required for maturation of urease via the functional incorporation of the urease nickel metallocenter. The polypeptide is Urease accessory protein UreD 3 (Streptomyces griseus subsp. griseus (strain JCM 4626 / CBS 651.72 / NBRC 13350 / KCC S-0626 / ISP 5235)).